A 174-amino-acid chain; its full sequence is Protein PopB (174 aa).

Positions 1–174 (MSHSKIKAGG…EAMKIKDDDD (174 aa)) are disordered. The segment covering 50–65 (LNKSNLGSDSQTWTPG) has biased composition (polar residues). Over residues 66-78 (STMVSLKSRSSSS) the composition is skewed to low complexity. Over residues 79-89 (HKPDTGGDTKP) the composition is skewed to basic and acidic residues. A compositionally biased stretch (low complexity) spans 147-161 (IALQRAIQRQTQTRQ). Basic and acidic residues predominate over residues 162–174 (KMQEAMKIKDDDD).

It is found in the secreted. Functionally, probably involved in host-pathogen interactions. This chain is Protein PopB (popB), found in Ralstonia nicotianae (strain ATCC BAA-1114 / GMI1000) (Ralstonia solanacearum).